We begin with the raw amino-acid sequence, 244 residues long: Uridylate kinase (244 aa).

17 to 20 (KLSG) is a binding site for ATP. Position 59 (glycine 59) interacts with UMP. Residues glycine 60 and arginine 64 each contribute to the ATP site. UMP-binding positions include aspartate 79 and 140–147 (TGNPFFTT). Positions 167, 173, and 176 each coordinate ATP.

This sequence belongs to the UMP kinase family. Homohexamer.

It localises to the cytoplasm. It carries out the reaction UMP + ATP = UDP + ADP. It functions in the pathway pyrimidine metabolism; CTP biosynthesis via de novo pathway; UDP from UMP (UMPK route): step 1/1. Inhibited by UTP. Functionally, catalyzes the reversible phosphorylation of UMP to UDP. This Hahella chejuensis (strain KCTC 2396) protein is Uridylate kinase.